Consider the following 532-residue polypeptide: Cytokinin dehydrogenase 8 (532 aa).

The signal sequence occupies residues 1–26; it reads MELKAMYLYAAVLAVLLCSSVNFIQS. Residues 51–238 enclose the FAD-binding PCMH-type domain; sequence VSDAPFAVMR…TRARIPLQLA (188 aa). Positions 87, 89, and 91 each coordinate FAD. At histidine 92 the chain carries Pros-8alpha-FAD histidine. FAD is bound by residues serine 93, glutamine 97, aspartate 162, threonine 167, serine 173, isoleucine 177, and isoleucine 228. Asparagine 420 carries an N-linked (GlcNAc...) asparagine glycan. FAD is bound by residues tyrosine 482 and glutamine 520.

Belongs to the oxygen-dependent FAD-linked oxidoreductase family. In terms of assembly, monomer. It depends on FAD as a cofactor.

It localises to the secreted. The protein resides in the extracellular space. The enzyme catalyses N(6)-dimethylallyladenine + A + H2O = 3-methyl-2-butenal + adenine + AH2. Its function is as follows. Catalyzes the oxidation of cytokinins, a family of N(6)-substituted adenine derivatives that are plant hormones, where the substituent is an isopentenyl group. The chain is Cytokinin dehydrogenase 8 (CKX8) from Oryza sativa subsp. indica (Rice).